The following is a 380-amino-acid chain: uncharacterized protein (380 aa).

This is an uncharacterized protein from Homo sapiens (Human).